Here is a 320-residue protein sequence, read N- to C-terminus: Apolipoprotein E (320 aa).

The first 18 residues, 1-18 (MKVLWAAFLVAFLAGCQG), serve as a signal peptide directing secretion. 8 repeat units span residues 82 to 103 (ALMD…EQLS), 104 to 125 (PVAE…ARLG), 126 to 147 (ADME…AMLG), 148 to 169 (QSTD…KRLL), 170 to 191 (RDVD…EGAE), 192 to 213 (RGVS…ARAA), 214 to 236 (TVGS…ERLR), and 237 to 258 (ARME…EQVE). The 8 X 22 AA approximate tandem repeats stretch occupies residues 82 to 199 (ALMDETMKEL…AERGVSAIRE (118 aa)). A Methionine sulfoxide modification is found at methionine 145. The residue at position 149 (serine 149) is a Phosphoserine. Residues 160–170 (HLRKLRKRLLR) are LDL and other lipoprotein receptors binding. Residue 164–167 (LRKR) coordinates heparin. The tract at residues 212-293 (AATVGSSLAS…SWFEPLVEDM (82 aa)) is lipid-binding and lipoprotein association. Residue 232 to 239 (GERLRARM) participates in heparin binding. A homooligomerization region spans residues 269–320 (QQMRLQAEAFQARLKSWFEPLVEDMQRQWAGLVEKVQAAVGASATPVPSDNH). Positions 281–293 (RLKSWFEPLVEDM) are specificity for association with VLDL.

This sequence belongs to the apolipoprotein A1/A4/E family. Homotetramer. May interact with ABCA1; functionally associated with ABCA1 in the biogenesis of HDLs. May interact with APP/A4 amyloid-beta peptide; the interaction is extremely stable in vitro but its physiological significance is unclear. May interact with MAPT. May interact with MAP2. In the cerebrospinal fluid, interacts with secreted SORL1. Interacts with PMEL; this allows the loading of PMEL luminal fragment on ILVs to induce fibril nucleation. APOE exists as multiple glycosylated and sialylated glycoforms within cells and in plasma. The extent of glycosylation and sialylation are tissue and context specific. In terms of processing, glycated in plasma VLDL. Post-translationally, phosphorylated by FAM20C in the extracellular medium.

Its subcellular location is the secreted. It is found in the extracellular space. The protein localises to the extracellular matrix. The protein resides in the extracellular vesicle. It localises to the endosome. Its subcellular location is the multivesicular body. Its function is as follows. APOE is an apolipoprotein, a protein associating with lipid particles, that mainly functions in lipoprotein-mediated lipid transport between organs via the plasma and interstitial fluids. APOE is a core component of plasma lipoproteins and is involved in their production, conversion and clearance. Apolipoproteins are amphipathic molecules that interact both with lipids of the lipoprotein particle core and the aqueous environment of the plasma. As such, APOE associates with chylomicrons, chylomicron remnants, very low density lipoproteins (VLDL) and intermediate density lipoproteins (IDL) but shows a preferential binding to high-density lipoproteins (HDL). It also binds a wide range of cellular receptors including the LDL receptor/LDLR, the LDL receptor-related proteins LRP1, LRP2 and LRP8 and the very low-density lipoprotein receptor/VLDLR that mediate the cellular uptake of the APOE-containing lipoprotein particles. Finally, APOE also has a heparin-binding activity and binds heparan-sulfate proteoglycans on the surface of cells, a property that supports the capture and the receptor-mediated uptake of APOE-containing lipoproteins by cells. A main function of APOE is to mediate lipoprotein clearance through the uptake of chylomicrons, VLDLs, and HDLs by hepatocytes. APOE is also involved in the biosynthesis by the liver of VLDLs as well as their uptake by peripheral tissues ensuring the delivery of triglycerides and energy storage in muscle, heart and adipose tissues. By participating in the lipoprotein-mediated distribution of lipids among tissues, APOE plays a critical role in plasma and tissues lipid homeostasis. APOE is also involved in two steps of reverse cholesterol transport, the HDLs-mediated transport of cholesterol from peripheral tissues to the liver, and thereby plays an important role in cholesterol homeostasis. First, it is functionally associated with ABCA1 in the biogenesis of HDLs in tissues. Second, it is enriched in circulating HDLs and mediates their uptake by hepatocytes. APOE also plays an important role in lipid transport in the central nervous system, regulating neuron survival and sprouting. The protein is Apolipoprotein E (APOE) of Saimiri boliviensis boliviensis (Bolivian squirrel monkey).